The chain runs to 250 residues: Probable phosphatase VIBHAR_04983 (250 aa).

Zn(2+) contacts are provided by H8, H10, H16, H41, E74, H102, H132, D194, and H196.

Belongs to the PHP family. It depends on Zn(2+) as a cofactor.

The polypeptide is Probable phosphatase VIBHAR_04983 (Vibrio campbellii (strain ATCC BAA-1116)).